The sequence spans 125 residues: Anticoagulant salivary protein 14 (125 aa).

The signal sequence occupies residues 1–21 (MGLTGTMLVLVSLAFFGSAAA). Residues Asn-26, Asn-81, and Asn-87 are each glycosylated (N-linked (GlcNAc...) asparagine). Positions 75–86 (GECHLTNNSGGP) are enriched in polar residues. Residues 75–125 (GECHLTNNSGGPNETDDYTPAPTEKPKQKKKKTKKTKKPKRKSKKDQEKNL) are disordered. The responsible for anticoagulant activity stretch occupies residues 91–125 (DYTPAPTEKPKQKKKKTKKTKKPKRKSKKDQEKNL). The segment covering 101 to 118 (KQKKKKTKKTKKPKRKSK) has biased composition (basic residues).

This sequence belongs to the salp14 family. Salivary gland (at protein level). Saliva (at protein level).

The protein localises to the secreted. In terms of biological role, salivary anticoagulant protein that facilitates blood feeding of adult ticks on vertebrate species. Inhibits host coagulation factor Xa (F10). Blocks the assembly and/or early activity of the prothrombinase complex (Xa-Va/F10-F5). Inhibits the lectin pathway of complement system activation in the host. This chain is Anticoagulant salivary protein 14, found in Ixodes scapularis (Black-legged tick).